Consider the following 473-residue polypeptide: tRNA modification GTPase MnmE (473 aa).

Residues arginine 31, glutamate 95, and arginine 134 each coordinate (6S)-5-formyl-5,6,7,8-tetrahydrofolate. The TrmE-type G domain occupies 230 to 394 (GVSTVIAGKP…LKQHMGDLVK (165 aa)). Residues 240–245 (NAGKST), 259–265 (SHMPGTT), and 284–287 (DTAG) contribute to the GTP site. Serine 244 and threonine 265 together coordinate Mg(2+). Lysine 473 is a binding site for (6S)-5-formyl-5,6,7,8-tetrahydrofolate.

The protein belongs to the TRAFAC class TrmE-Era-EngA-EngB-Septin-like GTPase superfamily. TrmE GTPase family. Homodimer. Heterotetramer of two MnmE and two MnmG subunits. It depends on K(+) as a cofactor.

The protein resides in the cytoplasm. In terms of biological role, exhibits a very high intrinsic GTPase hydrolysis rate. Involved in the addition of a carboxymethylaminomethyl (cmnm) group at the wobble position (U34) of certain tRNAs, forming tRNA-cmnm(5)s(2)U34. The polypeptide is tRNA modification GTPase MnmE (Chlorobaculum tepidum (strain ATCC 49652 / DSM 12025 / NBRC 103806 / TLS) (Chlorobium tepidum)).